Reading from the N-terminus, the 454-residue chain is Bifunctional protein GlmU (454 aa).

Residues 1–231 (MSRPTVSLIV…EAETLGVNTR (231 aa)) are pyrophosphorylase. UDP-N-acetyl-alpha-D-glucosamine-binding positions include 11-14 (LAAG), Lys25, Gln78, 83-84 (GT), 106-108 (YGD), Gly143, Glu157, Asn172, and Asn229. Asp108 contacts Mg(2+). Residue Asn229 coordinates Mg(2+). Positions 232 to 252 (AQLAAAEAEFQRRARAAALED) are linker. Residues 253–454 (GVTLTAPDTV…ARDASKKGTN (202 aa)) form an N-acetyltransferase region. Residues Arg318 and Lys336 each contribute to the UDP-N-acetyl-alpha-D-glucosamine site. His348 (proton acceptor) is an active-site residue. The UDP-N-acetyl-alpha-D-glucosamine site is built by Tyr351 and Asn362. Acetyl-CoA-binding positions include Ala365, 371 to 372 (NY), Ser390, Ser408, and Arg425.

This sequence in the N-terminal section; belongs to the N-acetylglucosamine-1-phosphate uridyltransferase family. In the C-terminal section; belongs to the transferase hexapeptide repeat family. As to quaternary structure, homotrimer. It depends on Mg(2+) as a cofactor.

The protein resides in the cytoplasm. It carries out the reaction alpha-D-glucosamine 1-phosphate + acetyl-CoA = N-acetyl-alpha-D-glucosamine 1-phosphate + CoA + H(+). The catalysed reaction is N-acetyl-alpha-D-glucosamine 1-phosphate + UTP + H(+) = UDP-N-acetyl-alpha-D-glucosamine + diphosphate. It participates in nucleotide-sugar biosynthesis; UDP-N-acetyl-alpha-D-glucosamine biosynthesis; N-acetyl-alpha-D-glucosamine 1-phosphate from alpha-D-glucosamine 6-phosphate (route II): step 2/2. Its pathway is nucleotide-sugar biosynthesis; UDP-N-acetyl-alpha-D-glucosamine biosynthesis; UDP-N-acetyl-alpha-D-glucosamine from N-acetyl-alpha-D-glucosamine 1-phosphate: step 1/1. The protein operates within bacterial outer membrane biogenesis; LPS lipid A biosynthesis. Its function is as follows. Catalyzes the last two sequential reactions in the de novo biosynthetic pathway for UDP-N-acetylglucosamine (UDP-GlcNAc). The C-terminal domain catalyzes the transfer of acetyl group from acetyl coenzyme A to glucosamine-1-phosphate (GlcN-1-P) to produce N-acetylglucosamine-1-phosphate (GlcNAc-1-P), which is converted into UDP-GlcNAc by the transfer of uridine 5-monophosphate (from uridine 5-triphosphate), a reaction catalyzed by the N-terminal domain. The sequence is that of Bifunctional protein GlmU from Cereibacter sphaeroides (strain ATCC 17025 / ATH 2.4.3) (Rhodobacter sphaeroides).